A 308-amino-acid chain; its full sequence is Phenylcoumaran benzylic ether reductase TP7 (308 aa).

Residues 11-17 (GGTGYIG), Arg-36, and Lys-45 contribute to the NADP(+) site. Lys-133 (proton acceptor) is an active-site residue. Arg-137 serves as a coordination point for NADP(+).

It belongs to the NmrA-type oxidoreductase family. Isoflavone reductase subfamily. Expressed in flowers. Expressed at low levels in stems.

The catalysed reaction is (-)-dehydrodiconiferyl alcohol + NADPH + H(+) = (S)-isodihydrodehydrodiconiferyl alcohol + NADP(+). It catalyses the reaction (+)-dehydrodiconiferyl alcohol + NADPH + H(+) = (R)-isodihydrodehydrodiconiferyl alcohol + NADP(+). It carries out the reaction (2R,3S)-dihydrodehydrodiconiferyl alcohol + NADPH + H(+) = (S)-tetrahydrodehydrodiconiferyl alcohol + NADP(+). The enzyme catalyses (2S,3R)-dihydrodehydrodiconiferyl alcohol + NADPH + H(+) = (R)-tetrahydrodehydrodiconiferyl alcohol + NADP(+). Oxidoreductase involved in lignan biosynthesis. Catalyzes the NADPH-dependent reduction of phenylcoumaran benzylic ethers. Converts dehydrodiconiferyl alcohol (DDC) to isodihydrodehydrodiconiferyl alcohol (IDDDC), and dihydrodehydrodiconiferyl alcohol (DDDC) to tetrahydrodehydrodiconiferyl alcohol (TDDC). The sequence is that of Phenylcoumaran benzylic ether reductase TP7 from Nicotiana tabacum (Common tobacco).